The chain runs to 258 residues: Intron-associated endonuclease 2 (258 aa).

The GIY-YIG domain maps to 14–96 (SVAFTYMVRF…RKYFNNEFIL (83 aa)).

Its function is as follows. This endonuclease is specific to the nrdD gene splice junction and is involved in intron homing. In Escherichia coli (Bacteriophage T4), this protein is Intron-associated endonuclease 2 (ITEVIIR).